Consider the following 160-residue polypeptide: Cytochrome c-type biogenesis protein CcmE (160 aa).

Residues 1–7 (MTRKQRR) lie on the Cytoplasmic side of the membrane. The helical; Signal-anchor for type II membrane protein transmembrane segment at 8–28 (LFMIFGALGTLGVAVGLILFA) threads the bilayer. The Periplasmic segment spans residues 29 to 160 (LSDNIVFFYG…TQGAAAPLIR (132 aa)). The heme site is built by H122 and Y126. Residues 140–160 (VWQEDGQAKPATQGAAAPLIR) form a disordered region.

This sequence belongs to the CcmE/CycJ family.

The protein resides in the cell inner membrane. Functionally, heme chaperone required for the biogenesis of c-type cytochromes. Transiently binds heme delivered by CcmC and transfers the heme to apo-cytochromes in a process facilitated by CcmF and CcmH. The chain is Cytochrome c-type biogenesis protein CcmE from Beijerinckia indica subsp. indica (strain ATCC 9039 / DSM 1715 / NCIMB 8712).